The sequence spans 423 residues: Serine hydroxymethyltransferase (423 aa).

119–121 lines the (6S)-5,6,7,8-tetrahydrofolate pocket; that stretch reads GHI. An N6-(pyridoxal phosphate)lysine modification is found at Lys-225.

It belongs to the SHMT family. As to quaternary structure, homodimer. Pyridoxal 5'-phosphate serves as cofactor.

The protein resides in the cytoplasm. It carries out the reaction (6R)-5,10-methylene-5,6,7,8-tetrahydrofolate + glycine + H2O = (6S)-5,6,7,8-tetrahydrofolate + L-serine. The protein operates within one-carbon metabolism; tetrahydrofolate interconversion. Its pathway is amino-acid biosynthesis; glycine biosynthesis; glycine from L-serine: step 1/1. Its function is as follows. Catalyzes the reversible interconversion of serine and glycine with tetrahydrofolate (THF) serving as the one-carbon carrier. Also exhibits THF-independent aldolase activity toward beta-hydroxyamino acids, producing glycine and aldehydes, via a retro-aldol mechanism. The sequence is that of Serine hydroxymethyltransferase from Methanocella arvoryzae (strain DSM 22066 / NBRC 105507 / MRE50).